We begin with the raw amino-acid sequence, 93 residues long: Alpha-conotoxin RVIIIA (93 aa).

Residues 1–20 form the signal peptide; sequence MMSKMGAMFVLLLLFTLASS. The propeptide occupies 21–46; it reads QQEGDVQARKTHPKREFQRILLRSGR. Residues E63 and E68 each carry the 4-carboxyglutamate modification.

In terms of processing, contains 5 disulfide bonds. In terms of tissue distribution, expressed by the venom duct.

Its subcellular location is the secreted. Functionally, alpha-conotoxins act on postsynaptic membranes, they bind to the nicotinic acetylcholine receptors (nAChR) and thus inhibit them. This toxin provokes a nearly complete and slowly reversible inhibition of both the human adult (alpha-1-beta-1-epsilon-delta (CHRNA1-CHRNB1-CHRND-CHRNE)) and human fetal (alpha-1-beta-1-gamma-delta (CHRNA1-CHRNB1-CHRNG-CHRND)) neuromuscular nAChRs. It also reversibly blocks the neuromuscular alpha-7/CHRNA7 nAChR, the alpha-3-beta-2 (CHRNA3-CHRNB2) nAChR, the chimeric alpha-6 or -3/beta-3 or -2 (CHRNA6/CHRNA3-CHRNB2-CHRNB3) nAChR and with a low potency the alpha-4-beta-2 (CHRNA4-CHRNB2) nAChR. In addition, the toxin also inhibits the alpha-9-alpha-10 (CHRNA9-CHRNA10) nAChR with a high potency (IC(50)=187 nM). In Conus radiatus (Rayed cone), this protein is Alpha-conotoxin RVIIIA.